Consider the following 462-residue polypeptide: HEPACAM family member 2 (462 aa).

The N-terminal stretch at 1–31 (MGQDAFMEPFGDTLGVFQCKIYLLLFGACSG) is a signal peptide. N-linked (GlcNAc...) asparagine glycans are attached at residues Asn-85, Asn-129, and Asn-165. Ig-like C2-type domains follow at residues 149-233 (PVVQ…SDII) and 235-331 (PIIY…THFT). 2 disulfides stabilise this stretch: Cys-170/Cys-219 and Cys-270/Cys-315. Asn-320 carries an N-linked (GlcNAc...) asparagine glycan. A helical transmembrane segment spans residues 352–372 (LASITGISLFLIISMCLLFLW). Over 373-462 (KKYQPYKVIK…IPAQQQDHPE (90 aa)) the chain is Cytoplasmic.

Poly-ADP-ribosylated (PARsylated) by tankyrase TNKS during late G2 and prophase, leading to translocation to mitotic centrosomes. In terms of processing, N-glycosylated. As to expression, widely expressed.

It localises to the golgi apparatus membrane. The protein localises to the cytoplasm. Its subcellular location is the cytoskeleton. It is found in the spindle. The protein resides in the microtubule organizing center. It localises to the centrosome. The protein localises to the midbody. Functionally, required during prometaphase for centrosome maturation. Following poly-ADP-ribosylation (PARsylation) by TNKS, translocates from the Golgi apparatus to mitotic centrosomes and plays a key role in the formation of robust microtubules for prompt movement of chromosomes: anchors AKAP9/CG-NAP, a scaffold protein of the gamma-tubulin ring complex and promotes centrosome maturation. The protein is HEPACAM family member 2 (HEPACAM2) of Homo sapiens (Human).